A 71-amino-acid chain; its full sequence is Protein SlyX homolog (71 aa).

A disordered region spans residues 52–71; it reads RLDQAESSAGAPANERPPHY.

It belongs to the SlyX family.

The chain is Protein SlyX homolog from Rhodopseudomonas palustris (strain ATCC BAA-98 / CGA009).